Consider the following 322-residue polypeptide: NADH-cytochrome b5 reductase 2 (322 aa).

The chain crosses the membrane as a helical span at residues 31-48 (LAPIYAAVGITGVGVGLY). The 105-residue stretch at 72-176 (QGWFDLKLSE…KGPIVKYPWE (105 aa)) folds into the FAD-binding FR-type domain. Residue 179 to 214 (KHNHICLIAGGTGITPMYQLAREIFKNPEDQTKVTL) coordinates FAD.

Belongs to the flavoprotein pyridine nucleotide cytochrome reductase family. FAD is required as a cofactor.

Its subcellular location is the mitochondrion outer membrane. The enzyme catalyses 2 Fe(III)-[cytochrome b5] + NADH = 2 Fe(II)-[cytochrome b5] + NAD(+) + H(+). Its function is as follows. May mediate the reduction of outer membrane cytochrome b5. This Aspergillus niger (strain ATCC MYA-4892 / CBS 513.88 / FGSC A1513) protein is NADH-cytochrome b5 reductase 2 (mcr1).